A 113-amino-acid chain; its full sequence is Ig heavy chain V region 36-60 (113 aa).

The sequence is that of Ig heavy chain V region 36-60 from Mus musculus (Mouse).